Here is a 346-residue protein sequence, read N- to C-terminus: Holliday junction branch migration complex subunit RuvB (346 aa).

A large ATPase domain (RuvB-L) region spans residues 1–181; that stretch reads MSDRNPLIDA…FGIPVRLNFY (181 aa). Residues Leu-20, Arg-21, Gly-62, Lys-65, Thr-66, Thr-67, 128–130, Arg-171, Tyr-181, and Arg-218 contribute to the ATP site; that span reads EDF. Thr-66 lines the Mg(2+) pocket. The interval 182 to 252 is small ATPAse domain (RuvB-S); sequence TVEELEYIVR…IADEALSRLE (71 aa). A head domain (RuvB-H) region spans residues 255 to 346; the sequence is NRGLDQLDRR…SQYGLFMEDE (92 aa). 3 residues coordinate DNA: Arg-291, Arg-310, and Arg-315.

It belongs to the RuvB family. Homohexamer. Forms an RuvA(8)-RuvB(12)-Holliday junction (HJ) complex. HJ DNA is sandwiched between 2 RuvA tetramers; dsDNA enters through RuvA and exits via RuvB. An RuvB hexamer assembles on each DNA strand where it exits the tetramer. Each RuvB hexamer is contacted by two RuvA subunits (via domain III) on 2 adjacent RuvB subunits; this complex drives branch migration. In the full resolvosome a probable DNA-RuvA(4)-RuvB(12)-RuvC(2) complex forms which resolves the HJ.

The protein resides in the cytoplasm. The enzyme catalyses ATP + H2O = ADP + phosphate + H(+). The RuvA-RuvB-RuvC complex processes Holliday junction (HJ) DNA during genetic recombination and DNA repair, while the RuvA-RuvB complex plays an important role in the rescue of blocked DNA replication forks via replication fork reversal (RFR). RuvA specifically binds to HJ cruciform DNA, conferring on it an open structure. The RuvB hexamer acts as an ATP-dependent pump, pulling dsDNA into and through the RuvAB complex. RuvB forms 2 homohexamers on either side of HJ DNA bound by 1 or 2 RuvA tetramers; 4 subunits per hexamer contact DNA at a time. Coordinated motions by a converter formed by DNA-disengaged RuvB subunits stimulates ATP hydrolysis and nucleotide exchange. Immobilization of the converter enables RuvB to convert the ATP-contained energy into a lever motion, pulling 2 nucleotides of DNA out of the RuvA tetramer per ATP hydrolyzed, thus driving DNA branch migration. The RuvB motors rotate together with the DNA substrate, which together with the progressing nucleotide cycle form the mechanistic basis for DNA recombination by continuous HJ branch migration. Branch migration allows RuvC to scan DNA until it finds its consensus sequence, where it cleaves and resolves cruciform DNA. The protein is Holliday junction branch migration complex subunit RuvB of Brucella suis (strain ATCC 23445 / NCTC 10510).